A 749-amino-acid polypeptide reads, in one-letter code: DNA topoisomerase 1 (749 aa).

The interval 1–110 (MSDSEDVALS…PKKEDSVETD (110 aa)) is disordered. Over residues 62 to 75 (LSKEKVNNKVKDEL) the composition is skewed to basic and acidic residues. Residues 79–94 (PVTPKKTPKISKTPVS) show a composition bias toward low complexity. Over residues 101–110 (PKKEDSVETD) the composition is skewed to basic and acidic residues. Interaction with DNA regions lie at residues 338 to 339 (KY), 401 to 406 (RAGGEK), and 493 to 495 (TAK). In terms of domain architecture, Topo IB-type catalytic spans 345-749 (NSSIKGISDM…IESTDENWRF (405 aa)). The O-(3'-phospho-DNA)-tyrosine intermediate role is filled by tyrosine 707.

The protein belongs to the type IB topoisomerase family.

Its subcellular location is the nucleus. It is found in the nucleolus. The protein localises to the nucleoplasm. The catalysed reaction is ATP-independent breakage of single-stranded DNA, followed by passage and rejoining.. Its function is as follows. Releases the supercoiling and torsional tension of DNA introduced during the DNA replication and transcription by transiently cleaving and rejoining one strand of the DNA duplex. Introduces a single-strand break via transesterification at the specific target site 5'-[CT]CCTTp site in duplex DNA. The scissile phosphodiester is attacked by the catalytic tyrosine of the enzyme, resulting in the formation of a DNA-(3'-phosphotyrosyl)-enzyme intermediate and the expulsion of a 5'-OH DNA strand. The free DNA strand then undergoes passage around the unbroken strand thus removing DNA supercoils. Finally, in the religation step, the DNA 5'-OH attacks the covalent intermediate to expel the active-site tyrosine and restore the DNA phosphodiester backbone. In Candidozyma auris (Yeast), this protein is DNA topoisomerase 1 (TOP1).